The chain runs to 539 residues: MTKYIFVTGGVVSSLGKGITASSIGRLLKNRGLKVTMQKFDPYINIDPGTMNPYQHGEVFVTDDGTEADLDLGHYERLVDVRTSKYSNVTTGKIYQEVLQRERRGDYHGGTVQVIPHVTNMIKEKVMRAAQMTDTDVVISEIGGTVGDMESTPFMEAIRQMRREVGSENVMYVHVTFVPYLRAAKELKSKPTQQSVSMLRSIGIQPNMLVLRSEMPVPQEMKDKISTFTDVPVDYIVESLDAPSLFDVPLSYQEQGVDQKVVDFLHIDSPKPVADMDEWRRMDERAKNLKYKTKITLVGKYVELEDAYISVTDALQHAGYLYNSKIEVEKIQAEDITEDNVAELLKDTQGLIVPGGFGIRGLDGMITSIKYAREHDIPFLGICLGMQMASVEFARNVLHLEDANSAEAEPNCKNNIIDLMADQRDQEKIGGTLRLGLYPAMLKAGTKTRECYDGQEVIQERHRHRYEFYNKYREDFEKAGMTFSGVSPDNHLVEIVEITDKKFFVAAQYHPEFLSRPNRPEGLFKGFIGAASGLQVDKF.

Positions 1 to 267 are amidoligase domain; it reads MTKYIFVTGG…DQKVVDFLHI (267 aa). Residue Ser13 coordinates CTP. Residue Ser13 participates in UTP binding. 14 to 19 is an ATP binding site; the sequence is SLGKGI. L-glutamine is bound at residue Tyr54. Asp71 contacts ATP. Mg(2+) is bound by residues Asp71 and Glu141. CTP-binding positions include 148–150, 188–193, and Lys224; these read DME and KSKPTQ. Residues 188-193 and Lys224 each bind UTP; that span reads KSKPTQ. The 244-residue stretch at 294–537 folds into the Glutamine amidotransferase type-1 domain; it reads KITLVGKYVE…IGAASGLQVD (244 aa). Residue Gly356 coordinates L-glutamine. Cys383 functions as the Nucleophile; for glutamine hydrolysis in the catalytic mechanism. L-glutamine contacts are provided by residues 384-387, Glu407, and Arg465; that span reads LGMQ. Catalysis depends on residues His510 and Glu512.

This sequence belongs to the CTP synthase family. Homotetramer.

The enzyme catalyses UTP + L-glutamine + ATP + H2O = CTP + L-glutamate + ADP + phosphate + 2 H(+). The catalysed reaction is L-glutamine + H2O = L-glutamate + NH4(+). It carries out the reaction UTP + NH4(+) + ATP = CTP + ADP + phosphate + 2 H(+). It functions in the pathway pyrimidine metabolism; CTP biosynthesis via de novo pathway; CTP from UDP: step 2/2. With respect to regulation, allosterically activated by GTP, when glutamine is the substrate; GTP has no effect on the reaction when ammonia is the substrate. The allosteric effector GTP functions by stabilizing the protein conformation that binds the tetrahedral intermediate(s) formed during glutamine hydrolysis. Inhibited by the product CTP, via allosteric rather than competitive inhibition. In terms of biological role, catalyzes the ATP-dependent amination of UTP to CTP with either L-glutamine or ammonia as the source of nitrogen. Regulates intracellular CTP levels through interactions with the four ribonucleotide triphosphates. The polypeptide is CTP synthase (Lactobacillus delbrueckii subsp. bulgaricus (strain ATCC BAA-365 / Lb-18)).